We begin with the raw amino-acid sequence, 328 residues long: UPF0421 protein SERP1427 (328 aa).

4 helical membrane-spanning segments follow: residues 26–46, 61–81, 109–129, and 132–152; these read LFCM…IVTI, LPAT…FGDQ, AVLT…FNFF, and LLTA…ILPP.

It belongs to the UPF0421 family.

The protein localises to the cell membrane. The polypeptide is UPF0421 protein SERP1427 (Staphylococcus epidermidis (strain ATCC 35984 / DSM 28319 / BCRC 17069 / CCUG 31568 / BM 3577 / RP62A)).